The chain runs to 185 residues: MINVNEFRPGITFEFENEIYVVISAQHSKQGRGQANVKTKVKNLRTGAITIKTFSGGERVEKAHIEKISMSFLYNDGASIVLMDDSTYEQVAIENTKITWELNFLTEGIKVKLRKFNNEILDIELPAKIELKITSTFDAVRGNTTTNPTKRATLETGYEIDVPLFIKEGESVIVSTEDGKYVSRG.

The protein belongs to the elongation factor P family.

It is found in the cytoplasm. The protein operates within protein biosynthesis; polypeptide chain elongation. Its function is as follows. Involved in peptide bond synthesis. Stimulates efficient translation and peptide-bond synthesis on native or reconstituted 70S ribosomes in vitro. Probably functions indirectly by altering the affinity of the ribosome for aminoacyl-tRNA, thus increasing their reactivity as acceptors for peptidyl transferase. In Mesomycoplasma hyopneumoniae (strain J / ATCC 25934 / NCTC 10110) (Mycoplasma hyopneumoniae), this protein is Elongation factor P.